The following is a 290-amino-acid chain: Ribosomal protein L11 methyltransferase (290 aa).

4 residues coordinate S-adenosyl-L-methionine: Thr-136, Gly-159, Asp-181, and Asn-228.

Belongs to the methyltransferase superfamily. PrmA family.

The protein localises to the cytoplasm. It catalyses the reaction L-lysyl-[protein] + 3 S-adenosyl-L-methionine = N(6),N(6),N(6)-trimethyl-L-lysyl-[protein] + 3 S-adenosyl-L-homocysteine + 3 H(+). Functionally, methylates ribosomal protein L11. This chain is Ribosomal protein L11 methyltransferase, found in Allorhizobium ampelinum (strain ATCC BAA-846 / DSM 112012 / S4) (Agrobacterium vitis (strain S4)).